Here is a 466-residue protein sequence, read N- to C-terminus: Fez family zinc finger protein 1 (466 aa).

The Engrailed homology 1 repressor signature appears at 34 to 49 (PLAFSIERIMSRTPEP). 6 consecutive C2H2-type zinc fingers follow at residues 261–283 (FTCE…MPVH), 289–311 (FVCK…KIIH), 317–339 (HKCN…TRIH), 345–367 (FVCE…KLTH), 373–395 (FKCN…MHTH), and 401–424 (FTCP…RKLH). Residues 446–466 (LPNREQSHTIIQSPQLQKSVY) form a disordered region. Residues 453-466 (HTIIQSPQLQKSVY) show a composition bias toward polar residues.

Belongs to the krueppel C2H2-type zinc-finger protein family.

It localises to the nucleus. Its function is as follows. Transcription repressor. Involved in the development of the forebrain region. This chain is Fez family zinc finger protein 1 (fezf1), found in Xenopus laevis (African clawed frog).